We begin with the raw amino-acid sequence, 298 residues long: Probable tRNA(His) guanylyltransferase (298 aa).

Residues Asp-58, Gly-59, and Asp-105 each contribute to the Mg(2+) site. Residues 58–63 (DGRNFH) and 104–105 (SD) each bind GTP.

Belongs to the tRNA(His) guanylyltransferase family. Homotetramer. Interacts with MFN1 and MFN2; functions as a guanyl-nucleotide exchange factor/GEF for MFN2 and also probably MFN1. Requires Mg(2+) as cofactor.

It localises to the cytoplasm. Its subcellular location is the mitochondrion. It catalyses the reaction a 5'-end ribonucleotide-tRNA(His) + GTP + ATP + H2O = a 5'-end phospho-guanosine-ribonucleotide-tRNA(His) + AMP + 2 diphosphate + H(+). Adds a GMP to the 5'-end of tRNA(His) after transcription and RNase P cleavage. This step is essential for proper recognition of the tRNA and for the fidelity of protein synthesis. Also functions as a guanyl-nucleotide exchange factor/GEF for the MFN1 and MFN2 mitofusins thereby regulating mitochondrial fusion. By regulating both mitochondrial dynamics and bioenergetic function, it contributes to cell survival following oxidative stress. This chain is Probable tRNA(His) guanylyltransferase (THG1L), found in Bos taurus (Bovine).